Here is a 199-residue protein sequence, read N- to C-terminus: Peptidyl-tRNA hydrolase (199 aa).

Residue Tyr18 coordinates tRNA. The active-site Proton acceptor is the His23. Positions 72, 74, and 120 each coordinate tRNA.

The protein belongs to the PTH family. In terms of assembly, monomer.

It is found in the cytoplasm. The enzyme catalyses an N-acyl-L-alpha-aminoacyl-tRNA + H2O = an N-acyl-L-amino acid + a tRNA + H(+). Hydrolyzes ribosome-free peptidyl-tRNAs (with 1 or more amino acids incorporated), which drop off the ribosome during protein synthesis, or as a result of ribosome stalling. Its function is as follows. Catalyzes the release of premature peptidyl moieties from peptidyl-tRNA molecules trapped in stalled 50S ribosomal subunits, and thus maintains levels of free tRNAs and 50S ribosomes. This Bifidobacterium longum (strain DJO10A) protein is Peptidyl-tRNA hydrolase.